A 254-amino-acid chain; its full sequence is Triosephosphate isomerase (254 aa).

Substrate is bound at residue 12 to 14 (NWK). Catalysis depends on His-99, which acts as the Electrophile. Catalysis depends on Glu-169, which acts as the Proton acceptor. Residues Gly-175, Ser-214, and 235-236 (GG) contribute to the substrate site.

It belongs to the triosephosphate isomerase family. Homodimer.

Its subcellular location is the cytoplasm. It carries out the reaction D-glyceraldehyde 3-phosphate = dihydroxyacetone phosphate. Its pathway is carbohydrate biosynthesis; gluconeogenesis. It functions in the pathway carbohydrate degradation; glycolysis; D-glyceraldehyde 3-phosphate from glycerone phosphate: step 1/1. Functionally, involved in the gluconeogenesis. Catalyzes stereospecifically the conversion of dihydroxyacetone phosphate (DHAP) to D-glyceraldehyde-3-phosphate (G3P). This is Triosephosphate isomerase from Bartonella henselae (strain ATCC 49882 / DSM 28221 / CCUG 30454 / Houston 1) (Rochalimaea henselae).